The primary structure comprises 313 residues: Recombination-promoting nuclease pSLT051 (313 aa).

It belongs to the Rpn/YhgA-like nuclease family.

Functionally, a low activity DNA endonuclease probably yielding 3'-hydroxyl ends. Involved in RecA-independent recombination and horizontal gene transfer. The protein is Recombination-promoting nuclease pSLT051 of Salmonella typhimurium (strain LT2 / SGSC1412 / ATCC 700720).